The primary structure comprises 300 residues: Bifunctional protein FolD (300 aa).

NADP(+) is bound by residues 168–170 (GRS), serine 193, and isoleucine 234.

Belongs to the tetrahydrofolate dehydrogenase/cyclohydrolase family. Homodimer.

The catalysed reaction is (6R)-5,10-methylene-5,6,7,8-tetrahydrofolate + NADP(+) = (6R)-5,10-methenyltetrahydrofolate + NADPH. The enzyme catalyses (6R)-5,10-methenyltetrahydrofolate + H2O = (6R)-10-formyltetrahydrofolate + H(+). The protein operates within one-carbon metabolism; tetrahydrofolate interconversion. In terms of biological role, catalyzes the oxidation of 5,10-methylenetetrahydrofolate to 5,10-methenyltetrahydrofolate and then the hydrolysis of 5,10-methenyltetrahydrofolate to 10-formyltetrahydrofolate. The protein is Bifunctional protein FolD of Ehrlichia ruminantium (strain Gardel).